A 1184-amino-acid polypeptide reads, in one-letter code: MAGPQRATSGLPTRRTTTRQPTRRAGSAIPERQTSTASPAVSTKTAAISRTRTLKSPGEPASVLAKRKERDIEREINEDTSIHVVVRCRGRNEREVKENSGVVLQTEGVKGKTVELSMGPNAVSNKTYTFDKVFSAAADQITVYEDVVLPIVTEMLAGYNCTIFAYGQTGTGKTYTMSGDMTDTLGILSDNAGIIPRVLYSLFAKLADTESTVKCSFIELYNEELRDLLSAEENPKLKIYDNEQKKGHMSTLVQGMEETYIDSATAGIKLLQQGSHKRQVAATKCNDLSSRSHTVFTITVNIKRTTESGEEYVCPGKLNLVDLAGSENIGRSGAENKRATEAGLINKSLLTLGRVINALVDKSQHIPYRESKLTRLLQDSLGGRTKTCIIATISPARSNLEETISTLDYAFRAKNIRNKPQINSTMPKMTLLREFTAEIEKLKAELIATRHRNGVYMSVESYEEMKMENESRRIISEEQRAKIESMESSLRHKVQELLTLTSKFNDLKKDNDDTLAALCSTNDVLQQTDIVLQNTRAQLEEEEMLRCAHEETEHQLQDVGKGLISTLGQTVEDINSLQSKLDRKAELDATNAELWRASSTEVSDVTKRIDQRVEAFQTRHAKLLETTSVKVNEFIATEISNIERTRSDLSEYNRSLDAACNNAKAETSSAHEDMNNVLEEIKDLREEVKSKVGEGLNGLSAAAARISEEVIGEFTQLHSQLHTSFNNLGKDLKSIFETMATHLSEQKNEINRLRAELQSSNRQNIETTHKASAHLAQAIEEEHVAAEAEREILMSQIKALVEESRQKQFARLRAKIDGVRTEISASGDMLEQATTQHDRQIDEWVFKSEQFAKDVNASKDEIRTKLQNDWEAFDQRNSTIRKATESVHKETVRIVDVQVDDMGRQMEALDDFVAKARSQNGRYRDAHIATLDTIATGVRDSYSSIEGRVENLTGRMNQFQQEATHHHATLEESIAPLSNDVRKPLTDLSSSFQNRSLEEYVATGVTPKKRKYDYISVLPSTESHEVLKSRLRTTKEMEVLPFNSDDQLSGPSSSPGGSPSKGFVYNDVEDEVGTHAPTVTNVNPSNTGLREVDANVAARPLVYSTGEKSTDQDGSPVVSPDSATEAEGMNGPPSKRRRSNSVVADTKLPNKMLARRMAGMMEGRENVPPPGISNGRRLRGRPSP.

The segment covering 1-11 (MAGPQRATSGL) has biased composition (polar residues). The interval 1–64 (MAGPQRATSG…KSPGEPASVL (64 aa)) is disordered. The span at 12 to 24 (PTRRTTTRQPTRR) shows a compositional bias: low complexity. Over residues 32–51 (RQTSTASPAVSTKTAAISRT) the composition is skewed to polar residues. Positions 81–416 (SIHVVVRCRG…LDYAFRAKNI (336 aa)) constitute a Kinesin motor domain. Residue 167 to 174 (GQTGTGKT) coordinates ATP. A coiled-coil region spans residues 489 to 900 (SLRHKVQELL…TVRIVDVQVD (412 aa)). The globular stretch occupies residues 901–1184 (DMGRQMEALD…GRRLRGRPSP (284 aa)). Phosphothreonine; by CDC2 is present on Thr-1006. Disordered stretches follow at residues 1041 to 1065 (PFNS…GFVY) and 1104 to 1184 (STGE…RPSP). Over residues 1049–1060 (SGPSSSPGGSPS) the composition is skewed to low complexity.

The protein belongs to the TRAFAC class myosin-kinesin ATPase superfamily. Kinesin family. BimC subfamily.

It localises to the cytoplasm. The protein localises to the cytoskeleton. Important role in mitotic dividing cells. Microtubule motor required for spindle body separation. The polypeptide is Kinesin-like protein bimC (bimC) (Emericella nidulans (strain FGSC A4 / ATCC 38163 / CBS 112.46 / NRRL 194 / M139) (Aspergillus nidulans)).